A 224-amino-acid polypeptide reads, in one-letter code: Peptidyl-prolyl cis-trans isomerase FKBP3 (224 aa).

An N-acetylalanine modification is found at alanine 2. Serine 36 carries the post-translational modification Phosphoserine. The segment at 88 to 118 (VKLSDDKPKDSKSEETLDEGPPKYTKSILKK) is disordered. Residues 89–102 (KLSDDKPKDSKSEE) show a composition bias toward basic and acidic residues. At lysine 99 the chain carries N6-acetyllysine. A PPIase FKBP-type domain is found at 128-224 (GDVVHCWYTG…IFEVELVDID (97 aa)). The residue at position 152 (serine 152) is a Phosphoserine. Lysine 170 is subject to N6-acetyllysine.

It belongs to the FKBP-type PPIase family.

The protein localises to the nucleus. It catalyses the reaction [protein]-peptidylproline (omega=180) = [protein]-peptidylproline (omega=0). With respect to regulation, inhibited preferentially by rapamycin over FK506. In terms of biological role, FK506- and rapamycin-binding proteins (FKBPs) constitute a family of receptors for the two immunosuppressants which inhibit T-cell proliferation by arresting two distinct cytoplasmic signal transmission pathways. PPIases accelerate the folding of proteins. In Mus musculus (Mouse), this protein is Peptidyl-prolyl cis-trans isomerase FKBP3 (Fkbp3).